The sequence spans 289 residues: Probable endonuclease 4 (289 aa).

Residues H74, H115, E150, D184, H187, H218, D231, H233, and E263 each contribute to the Zn(2+) site.

This sequence belongs to the AP endonuclease 2 family. It depends on Zn(2+) as a cofactor.

It carries out the reaction Endonucleolytic cleavage to 5'-phosphooligonucleotide end-products.. Its function is as follows. Endonuclease IV plays a role in DNA repair. It cleaves phosphodiester bonds at apurinic or apyrimidinic (AP) sites, generating a 3'-hydroxyl group and a 5'-terminal sugar phosphate. In Mycoplasma capricolum subsp. capricolum (strain California kid / ATCC 27343 / NCTC 10154), this protein is Probable endonuclease 4.